The primary structure comprises 283 residues: Cyclin-C (283 aa).

The 99-residue stretch at 46–144 (NVIQALGEHL…VLECEFYLLE (99 aa)) folds into the Cyclin N-terminal domain. The tract at residues 252–283 (TILSKMPKPKPPPNSEGEQGPNGSQNSSYSQS) is disordered. Positions 272 to 283 (PNGSQNSSYSQS) are enriched in polar residues. At serine 275 the chain carries Phosphoserine.

The protein belongs to the cyclin family. Cyclin C subfamily. Component of the Mediator complex, which is composed of MED1, MED4, MED6, MED7, MED8, MED9, MED10, MED11, MED12, MED13, MED13L, MED14, MED15, MED16, MED17, MED18, MED19, MED20, MED21, MED22, MED23, MED24, MED25, MED26, MED27, MED29, MED30, MED31, CCNC, CDK8 and CDC2L6/CDK11. The MED12, MED13, CCNC and CDK8 subunits form a distinct module termed the CDK8 module. Mediator containing the CDK8 module is less active than Mediator lacking this module in supporting transcriptional activation. Individual preparations of the Mediator complex lacking one or more distinct subunits have been variously termed ARC, CRSP, DRIP, PC2, SMCC and TRAP. The cylin/CDK pair formed by CCNC/CDK8 also associates with the large subunit of RNA polymerase II.

It is found in the nucleus. Functionally, component of the Mediator complex, a coactivator involved in regulated gene transcription of nearly all RNA polymerase II-dependent genes. Mediator functions as a bridge to convey information from gene-specific regulatory proteins to the basal RNA polymerase II transcription machinery. Mediator is recruited to promoters by direct interactions with regulatory proteins and serves as a scaffold for the assembly of a functional preinitiation complex with RNA polymerase II and the general transcription factors. Binds to and activates cyclin-dependent kinase CDK8 that phosphorylates the CTD (C-terminal domain) of the large subunit of RNA polymerase II (RNAp II), which may inhibit the formation of a transcription initiation complex. In Bos taurus (Bovine), this protein is Cyclin-C (CCNC).